The sequence spans 328 residues: uncharacterized protein (328 aa).

This sequence to the C-terminal of para-aminobenzoate synthase component I.

This is an uncharacterized protein from Haemophilus influenzae (strain ATCC 51907 / DSM 11121 / KW20 / Rd).